A 518-amino-acid chain; its full sequence is Bifunctional enzyme NanE/NanK (518 aa).

A manNAc-6-P epimerase region spans residues 1-234 (MCRVQGMIEE…DAVESAAKPS (234 aa)). The interval 235–518 (SPVLAFDIGG…VADLAATYFS (284 aa)) is manNAc kinase. ATP is bound by residues 239-246 (AFDIGGTK) and 365-372 (GIGGGIVL).

In the N-terminal section; belongs to the NanE family. The protein in the C-terminal section; belongs to the ROK (NagC/XylR) family. NanK subfamily.

The catalysed reaction is an N-acyl-D-glucosamine 6-phosphate = an N-acyl-D-mannosamine 6-phosphate. It carries out the reaction an N-acyl-D-mannosamine + ATP = an N-acyl-D-mannosamine 6-phosphate + ADP + H(+). It participates in amino-sugar metabolism; N-acetylneuraminate degradation; D-fructose 6-phosphate from N-acetylneuraminate: step 2/5. The protein operates within amino-sugar metabolism; N-acetylneuraminate degradation; D-fructose 6-phosphate from N-acetylneuraminate: step 3/5. Converts N-acetylmannosamine-6-phosphate (ManNAc-6-P) to N-acetylglucosamine-6-phosphate (GlcNAc-6-P). In terms of biological role, catalyzes the phosphorylation of N-acetylmannosamine (ManNAc) to ManNAc-6-P. This Brucella melitensis biotype 1 (strain ATCC 23456 / CCUG 17765 / NCTC 10094 / 16M) protein is Bifunctional enzyme NanE/NanK (nanEK).